We begin with the raw amino-acid sequence, 121 residues long: Alpha-lactalbumin (121 aa).

The C-type lysozyme domain maps to I1 to C121. 4 disulfides stabilise this stretch: C6/C121, C28/C112, C61/C77, and C73/C91. N44 is a glycosylation site (N-linked (GlcNAc...) asparagine). Positions 79, 82, 84, 87, and 88 each coordinate Ca(2+).

Belongs to the glycosyl hydrolase 22 family. In terms of assembly, lactose synthase (LS) is a heterodimer of a catalytic component, beta1,4-galactosyltransferase (beta4Gal-T1) and a regulatory component, alpha-lactalbumin (LA). Mammary gland specific. Secreted in milk.

It is found in the secreted. Its function is as follows. Regulatory subunit of lactose synthase, changes the substrate specificity of galactosyltransferase in the mammary gland making glucose a good acceptor substrate for this enzyme. This enables LS to synthesize lactose, the major carbohydrate component of milk. In other tissues, galactosyltransferase transfers galactose onto the N-acetylglucosamine of the oligosaccharide chains in glycoproteins. The protein is Alpha-lactalbumin (LALBA) of Notamacropus rufogriseus (Red-necked wallaby).